The sequence spans 185 residues: uncharacterized protein (185 aa).

The signal sequence occupies residues 1–24; sequence MPCNRAVFGAFVLALLISLQSVYF. The chain crosses the membrane as a helical span at residues 50-70; sequence VAVNVIVEFSFDILFFLCGLL. Over residues 96-113 the composition is skewed to basic and acidic residues; the sequence is ELEHVSSRRRNDSRDDST. The segment at 96 to 185 is disordered; it reads ELEHVSSRRR…LFTAGGIGLP (90 aa). A compositionally biased stretch (polar residues) spans 114 to 126; sequence VRNVSKTSPLASQ. A compositionally biased stretch (basic and acidic residues) spans 127 to 138; that stretch reads RSRDHFDGDPRE. The segment covering 139–155 has biased composition (pro residues); sequence PAPPAYSPADFYPPPAS.

It localises to the host membrane. This is an uncharacterized protein from Colorado tick fever virus (strain USA/Florio N-7180) (CTFV).